The chain runs to 478 residues: Bifunctional protein HldE (478 aa).

The interval 1 to 318 (MKVTLPDFRQ…ENAIRGRADT (318 aa)) is ribokinase. 195–198 (NLSE) is an ATP binding site. The active site involves D264. A cytidylyltransferase region spans residues 344–478 (MTNGCFDILH…NTIKANASKS (135 aa)).

The protein in the N-terminal section; belongs to the carbohydrate kinase PfkB family. In the C-terminal section; belongs to the cytidylyltransferase family. As to quaternary structure, homodimer.

The enzyme catalyses D-glycero-beta-D-manno-heptose 7-phosphate + ATP = D-glycero-beta-D-manno-heptose 1,7-bisphosphate + ADP + H(+). It catalyses the reaction D-glycero-beta-D-manno-heptose 1-phosphate + ATP + H(+) = ADP-D-glycero-beta-D-manno-heptose + diphosphate. It participates in nucleotide-sugar biosynthesis; ADP-L-glycero-beta-D-manno-heptose biosynthesis; ADP-L-glycero-beta-D-manno-heptose from D-glycero-beta-D-manno-heptose 7-phosphate: step 1/4. Its pathway is nucleotide-sugar biosynthesis; ADP-L-glycero-beta-D-manno-heptose biosynthesis; ADP-L-glycero-beta-D-manno-heptose from D-glycero-beta-D-manno-heptose 7-phosphate: step 3/4. In terms of biological role, catalyzes the phosphorylation of D-glycero-D-manno-heptose 7-phosphate at the C-1 position to selectively form D-glycero-beta-D-manno-heptose-1,7-bisphosphate. Functionally, catalyzes the ADP transfer from ATP to D-glycero-beta-D-manno-heptose 1-phosphate, yielding ADP-D-glycero-beta-D-manno-heptose. This chain is Bifunctional protein HldE, found in Pectobacterium carotovorum subsp. carotovorum (strain PC1).